Reading from the N-terminus, the 568-residue chain is Periplasmic trehalase (568 aa).

Residues 1 to 39 (MPHVVARSGDVMSSAAPPSCTSLLGLSLSMFVAPCTLTA) form the signal peptide. Residues arginine 169, 176–177 (WD), asparagine 213, 222–224 (RSQ), 294–296 (RPE), and glycine 327 contribute to the substrate site. Catalysis depends on proton donor/acceptor residues aspartate 329 and glutamate 511. Glutamate 526 is a binding site for substrate.

The protein belongs to the glycosyl hydrolase 37 family.

It is found in the periplasm. It catalyses the reaction alpha,alpha-trehalose + H2O = alpha-D-glucose + beta-D-glucose. Functionally, provides the cells with the ability to utilize trehalose at high osmolarity by splitting it into glucose molecules that can subsequently be taken up by the phosphotransferase-mediated uptake system. The chain is Periplasmic trehalase from Xanthomonas oryzae pv. oryzae (strain MAFF 311018).